Reading from the N-terminus, the 102-residue chain is Complement inhibitor RaCI3 (102 aa).

Residues 1–24 (MAALNGLVLLLLTISAMFISECYS) form the signal peptide. Disulfide bonds link Cys-37-Cys-61, Cys-42-Cys-63, and Cys-57-Cys-78.

This sequence belongs to the RaCI family. In terms of tissue distribution, expressed in salivary glands.

The protein resides in the secreted. Functionally, complement inhibitor. Prevents complement-mediated C5 activation by binding to C5. Binds C5 at a different binding site than the other tick complement inhibitors OmCI and CirpT1, and the drug eculizumab. Inhibits complement in human and guinea pig but not in other species tested (rabbit, rat, mouse, and pig). This is Complement inhibitor RaCI3 from Dermacentor andersoni (Rocky mountain wood tick).